The following is a 961-amino-acid chain: Outer capsid protein VP2 (961 aa).

This sequence belongs to the orbivirus VP2 family.

It is found in the virion. In terms of biological role, the VP2 protein is one of the two proteins (with VP5) which constitute the virus particle outer capsid. It is the major target of the host immunogenic response. Responsible for viral attachment to target host cell, probably by binding to sialic acid. This attachment induces virion internalization predominantly through clathrin-dependent endocytosis. The protein is Outer capsid protein VP2 (Segment-2) of Antilocapra americana (Pronghorn).